We begin with the raw amino-acid sequence, 394 residues long: 3-dehydroquinate synthase (394 aa).

Residues 112-116 (GVIGD), 136-137 (TT), K149, K158, and 176-179 (TLAT) contribute to the NAD(+) site. Zn(2+)-binding residues include E191, H254, and H276. The segment covering 371–388 (STNQHTTYSPHQHATTKP) has biased composition (polar residues). The disordered stretch occupies residues 371 to 394 (STNQHTTYSPHQHATTKPPNRRPH).

This sequence belongs to the sugar phosphate cyclases superfamily. Dehydroquinate synthase family. Requires NAD(+) as cofactor. Co(2+) serves as cofactor. It depends on Zn(2+) as a cofactor.

It is found in the cytoplasm. It catalyses the reaction 7-phospho-2-dehydro-3-deoxy-D-arabino-heptonate = 3-dehydroquinate + phosphate. It functions in the pathway metabolic intermediate biosynthesis; chorismate biosynthesis; chorismate from D-erythrose 4-phosphate and phosphoenolpyruvate: step 2/7. Its function is as follows. Catalyzes the conversion of 3-deoxy-D-arabino-heptulosonate 7-phosphate (DAHP) to dehydroquinate (DHQ). The sequence is that of 3-dehydroquinate synthase from Xylella fastidiosa (strain 9a5c).